The chain runs to 191 residues: MGVMSLSKTMVVVVLQVMILLGQEIGKVSSTLYKVGDLDAWGIPIDAKVYSKWPKSHSFKIGDSLLFLYPPSEDSLIQVTPSNFKSCNTKDPILYMNDGNSLFNLTQNGTLYFTSANPGHCTKYQKLLVSVGTYSAEAEALSPSSAADAPSYQNAFGSIPLSQKSSASSSLISAFSTVAASLACAVVGAIM.

Positions M1–G22 are cleaved as a signal peptide. Residues T31–T133 enclose the Phytocyanin domain. An intrachain disulfide couples C87 to C121. N-linked (GlcNAc...) asparagine glycosylation is found at N104 and N108. S165 carries the GPI-anchor amidated serine lipid modification. The propeptide at S166–M191 is removed in mature form.

This sequence belongs to the early nodulin-like (ENODL) family. In terms of tissue distribution, mostly expressed in seedlings and roots, and, to a lower extent, in leaves, flowers, stems and seeds.

The protein localises to the cell membrane. Functionally, may act as a carbohydrate transporter. The protein is Early nodulin-like protein 8 of Arabidopsis thaliana (Mouse-ear cress).